Consider the following 446-residue polypeptide: MEAEAADAPPGRVEAALSCFSFNQDCTSLAIGTKAGYKLFSLSSVEQLDQVHGSNEIPDVYIVERLFSSSLVVVVSHTKPRQMNVYHFKKGTEICNYSYSSNILSIRLNRQRLLVCLEESIYIHNIKDMKLLKTVLDIPSNPTGLCALSINHSNSYLAYPGSQSTGEIVLYDGNSLKTVCTIAAHEGTLAAITFNSSGSKLASASEKGTVIRVFSVPEGQKLYEFRRGMKRYVTISSLVFSMDSQFLCASSNTETVHIFKMEHLTDSRPEEPSTWSGYMGKMFMAATNYLPAQVSDMMNQDRAFATGRLNFSGQKNICTLSTIQKLPRLLVASSDGHLYIYNLDPQDGGECVLIKTHSLLSSGTTEENKENDLRPSLPPSYAATVARPSTSAASTVPGYSEDGGALRGEVIPEHEFATGPVCLDDENEFPPIILCRGSQKGKTKQS.

The short motif at 131–136 (LLKTVL) is the Nuclear receptor interaction element. The WD 1 repeat unit spans residues 184 to 224 (AHEGTLAAITFNSSGSKLASASEKGTVIRVFSVPEGQKLYE). The L/FRRG motif signature appears at 225-228 (FRRG). WD repeat units follow at residues 230 to 269 (KRYV…DSRP) and 312 to 351 (SGQK…GGEC). A disordered region spans residues 386–406 (ARPSTSAASTVPGYSEDGGAL).

The protein belongs to the WD repeat PROPPIN family. As to quaternary structure, interacts with androgen receptor (AR) and the estrogen receptors ESR1 and ESR2. Interacts with WIPI2. Interacts with WDR45. Interacts with ATG16L1. May interact with NUDC.

It localises to the golgi apparatus. The protein localises to the trans-Golgi network. Its subcellular location is the endosome. It is found in the cytoplasmic vesicle. The protein resides in the clathrin-coated vesicle. It localises to the preautophagosomal structure membrane. The protein localises to the cytoplasm. Its subcellular location is the cytoskeleton. Component of the autophagy machinery that controls the major intracellular degradation process by which cytoplasmic materials are packaged into autophagosomes and delivered to lysosomes for degradation. Plays an important role in starvation- and calcium-mediated autophagy, as well as in mitophagy. Functions downstream of the ULK1 and PI3-kinases that produce phosphatidylinositol 3-phosphate (PtdIns3P) on membranes of the endoplasmic reticulum once activated. Binds phosphatidylinositol 3-phosphate (PtdIns3P), and maybe other phosphoinositides including PtdIns3,5P2 and PtdIns5P, and is recruited to phagophore assembly sites at the endoplasmic reticulum membranes. There, it assists WIPI2 in the recruitment of ATG12-ATG5-ATG16L1, a complex that directly controls the elongation of the nascent autophagosomal membrane. Together with WDR45/WIPI4, promotes ATG2 (ATG2A or ATG2B)-mediated lipid transfer by enhancing ATG2-association with phosphatidylinositol 3-monophosphate (PI3P)-containing membranes. Involved in xenophagy of Staphylococcus aureus. Invading S.aureus cells become entrapped in autophagosome-like WIPI1 positive vesicles targeted for lysosomal degradation. Also plays a distinct role in controlling the transcription of melanogenic enzymes and melanosome maturation, a process that is distinct from starvation-induced autophagy. May also regulate the trafficking of proteins involved in the mannose-6-phosphate receptor (MPR) recycling pathway. This is WD repeat domain phosphoinositide-interacting protein 1 (Wipi1) from Mus musculus (Mouse).